We begin with the raw amino-acid sequence, 203 residues long: Putative 3-methyladenine DNA glycosylase (203 aa).

The protein belongs to the DNA glycosylase MPG family.

This is Putative 3-methyladenine DNA glycosylase from Clostridium tetani (strain Massachusetts / E88).